The chain runs to 270 residues: Formamidopyrimidine-DNA glycosylase (270 aa).

The Schiff-base intermediate with DNA role is filled by Pro2. Glu3 acts as the Proton donor in catalysis. Lys58 (proton donor; for beta-elimination activity) is an active-site residue. Residues His90, Arg109, and Arg152 each contribute to the DNA site. The FPG-type zinc finger occupies 237–270 (RVYGREGEPCHCGTVIRRRVDGGRSTFYCPKCQK). Residue Arg260 is the Proton donor; for delta-elimination activity of the active site.

This sequence belongs to the FPG family. Monomer. The cofactor is Zn(2+).

It catalyses the reaction Hydrolysis of DNA containing ring-opened 7-methylguanine residues, releasing 2,6-diamino-4-hydroxy-5-(N-methyl)formamidopyrimidine.. The enzyme catalyses 2'-deoxyribonucleotide-(2'-deoxyribose 5'-phosphate)-2'-deoxyribonucleotide-DNA = a 3'-end 2'-deoxyribonucleotide-(2,3-dehydro-2,3-deoxyribose 5'-phosphate)-DNA + a 5'-end 5'-phospho-2'-deoxyribonucleoside-DNA + H(+). Involved in base excision repair of DNA damaged by oxidation or by mutagenic agents. Acts as a DNA glycosylase that recognizes and removes damaged bases. Has a preference for oxidized purines, such as 7,8-dihydro-8-oxoguanine (8-oxoG). Has AP (apurinic/apyrimidinic) lyase activity and introduces nicks in the DNA strand. Cleaves the DNA backbone by beta-delta elimination to generate a single-strand break at the site of the removed base with both 3'- and 5'-phosphates. The chain is Formamidopyrimidine-DNA glycosylase from Rhizorhabdus wittichii (strain DSM 6014 / CCUG 31198 / JCM 15750 / NBRC 105917 / EY 4224 / RW1) (Sphingomonas wittichii).